The chain runs to 174 residues: ATP synthase subunit d, mitochondrial (174 aa).

Serine 2 carries the post-translational modification N-acetylserine.

This sequence belongs to the ATPase d subunit family.

It is found in the mitochondrion inner membrane. Its function is as follows. Mitochondrial membrane ATP synthase (F(1)F(0) ATP synthase or Complex V) produces ATP from ADP in the presence of a proton gradient across the membrane which is generated by electron transport complexes of the respiratory chain. F-type ATPases consist of two structural domains, F(1) - containing the extramembraneous catalytic core, and F(0) - containing the membrane proton channel, linked together by a central stalk and a peripheral stalk. During catalysis, ATP synthesis in the catalytic domain of F(1) is coupled via a rotary mechanism of the central stalk subunits to proton translocation. Part of the complex F(0) domain and the peripheric stalk, which acts as a stator to hold the catalytic alpha(3)beta(3) subcomplex and subunit a/ATP6 static relative to the rotary elements. The polypeptide is ATP synthase subunit d, mitochondrial (ATP7) (Kluyveromyces lactis (strain ATCC 8585 / CBS 2359 / DSM 70799 / NBRC 1267 / NRRL Y-1140 / WM37) (Yeast)).